The following is a 296-amino-acid chain: NAD kinase (296 aa).

Residue aspartate 72 is the Proton acceptor of the active site. NAD(+) contacts are provided by residues 72–73, 146–147, arginine 157, lysine 174, aspartate 176, 187–192, and glutamine 247; these read DG, ND, and TAYALS.

Belongs to the NAD kinase family. It depends on a divalent metal cation as a cofactor.

It is found in the cytoplasm. It carries out the reaction NAD(+) + ATP = ADP + NADP(+) + H(+). Involved in the regulation of the intracellular balance of NAD and NADP, and is a key enzyme in the biosynthesis of NADP. Catalyzes specifically the phosphorylation on 2'-hydroxyl of the adenosine moiety of NAD to yield NADP. This chain is NAD kinase, found in Pseudomonas entomophila (strain L48).